A 394-amino-acid polypeptide reads, in one-letter code: Envelope glycoprotein D (394 aa).

The N-terminal stretch at 1–25 (MGGAAARLGAVILFVVIVGLHGVRG) is a signal peptide. Positions 25–57 (GKYALADASLKMADPNRFRGKDLPVPDRLTDPP) are interaction with TNFRSF14. Residues 26-339 (KYALADASLK…PYHPPATPNN (314 aa)) lie on the Virion surface side of the membrane. Histidine 64 is a Zn(2+) binding site. 3 cysteine pairs are disulfide-bonded: cysteine 91–cysteine 214, cysteine 131–cysteine 227, and cysteine 143–cysteine 152. Residues asparagine 119 and asparagine 146 are each glycosylated (N-linked (GlcNAc...) asparagine; by host). Aspartate 240 lines the Zn(2+) pocket. A profusion region spans residues 261 to 305 (LKIAGWHGPKAPYTSTLLPPELSETPNATQPELAPEDPEDSALLE). The segment at 275–301 (STLLPPELSETPNATQPELAPEDPEDS) is disordered. The N-linked (GlcNAc...) asparagine; by host glycan is linked to asparagine 287. The helical transmembrane segment at 340-364 (MGLIAGAVGGSLLAALVICGIVYWM) threads the bilayer. Residues 365–394 (RRRTQKGPKRIRLPHIREDDQPSSHQPLFY) lie on the Intravirion side of the membrane. A disordered region spans residues 374–394 (RIRLPHIREDDQPSSHQPLFY).

The protein belongs to the herpesviridae glycoprotein D family. Homodimer. Interacts with host receptor TNFRSF14. Interacts with host receptor NECTIN1. Interacts (via profusion domain) with gB; this interaction occurs in the absence of gH/gL. Interacts (via profusion domain) with gH/gL heterodimer; this interaction occurs in the absence of gB. Associates with the gB-gH/gL-gD complex. Interacts (via C-terminus) with UL11 tegument protein. Interacts with host RSAD2.

Its subcellular location is the virion membrane. The protein localises to the host Golgi apparatus. Envelope glycoprotein that binds to the host cell entry receptors NECTIN1, TNFRSF14/HVEM and 3-O-sulfated heparan sulfate, promoting the virus entry into host cells. May trigger fusion with host membrane, by recruiting the fusion machinery composed of gB and gH/gL. In Homo sapiens (Human), this protein is Envelope glycoprotein D (gD).